The primary structure comprises 264 residues: 3-methyl-2-oxobutanoate hydroxymethyltransferase (264 aa).

2 residues coordinate Mg(2+): Asp-45 and Asp-84. 3-methyl-2-oxobutanoate is bound by residues 45-46 (DS), Asp-84, and Lys-112. Glu-114 serves as a coordination point for Mg(2+). Glu-181 functions as the Proton acceptor in the catalytic mechanism.

The protein belongs to the PanB family. Homodecamer; pentamer of dimers. Requires Mg(2+) as cofactor.

The protein localises to the cytoplasm. The enzyme catalyses 3-methyl-2-oxobutanoate + (6R)-5,10-methylene-5,6,7,8-tetrahydrofolate + H2O = 2-dehydropantoate + (6S)-5,6,7,8-tetrahydrofolate. Its pathway is cofactor biosynthesis; (R)-pantothenate biosynthesis; (R)-pantoate from 3-methyl-2-oxobutanoate: step 1/2. Functionally, catalyzes the reversible reaction in which hydroxymethyl group from 5,10-methylenetetrahydrofolate is transferred onto alpha-ketoisovalerate to form ketopantoate. The protein is 3-methyl-2-oxobutanoate hydroxymethyltransferase of Escherichia coli O81 (strain ED1a).